The chain runs to 1164 residues: Phospholipid-transporting ATPase IA (1164 aa).

The Cytoplasmic segment spans residues 1 to 75 (MPTMRRTVSE…PRFLYSQFRR (75 aa)). Position 25 is a phosphoserine (S25). T28 is subject to Phosphothreonine. S29 carries the phosphoserine modification. Residues 76 to 96 (AANSFFLFIALLQQIPDVSPT) traverse the membrane as a helical segment. The Exoplasmic loop portion of the chain corresponds to 97–100 (GRYT). The helical transmembrane segment at 101-121 (TLVPLLFILAVAAIKEIIEDI) threads the bilayer. The Cytoplasmic segment spans residues 122–297 (KRHKADNAVN…SNVERITNVQ (176 aa)). A helical membrane pass occupies residues 298 to 318 (ILILFCILIAMSLVCSVGSAI). Topologically, residues 319 to 339 (WNRRHSGKDWYLHLHYGGASN) are exoplasmic loop. Residues 340-360 (FGLNFLTFIILFNNLIPISLL) traverse the membrane as a helical segment. At 361–866 (VTLEVVKFTQ…KCILYCFYKN (506 aa)) the chain is on the cytoplasmic side. Catalysis depends on D409, which acts as the 4-aspartylphosphate intermediate. D409, K410, and T411 together coordinate ATP. D409 provides a ligand contact to Mg(2+). T411 contributes to the Mg(2+) binding site. S443 carries the post-translational modification Phosphoserine. ATP is bound by residues E508, F549, K572, R605, T685, G686, D687, 741–748 (ALIIDGKT), R775, and K781. Mg(2+) is bound at residue D801. ATP is bound by residues N804 and D805. A Mg(2+)-binding site is contributed by D805. A helical membrane pass occupies residues 867-887 (IVLYIIEIWFAFVNGFSGQIL). Residues 888-890 (FER) lie on the Exoplasmic loop side of the membrane. A helical membrane pass occupies residues 891-911 (WCIGLYNVMFTAMPPLTLGIF). The Cytoplasmic portion of the chain corresponds to 912 to 939 (ERSCRKENMLKYPELYKTSQNALDFNTK). Residues 940 to 960 (VFWVHCLNGLFHSVILFWFPL) traverse the membrane as a helical segment. Over 961-977 (KALQYGTVFGNGKTSDY) the chain is Exoplasmic loop. A helical transmembrane segment spans residues 978–998 (LLLGNFVYTFVVITVCLKAGL). The Cytoplasmic portion of the chain corresponds to 999-1008 (ETSYWTWFSH). A helical transmembrane segment spans residues 1009 to 1029 (IAIWGSIALWVVFFGIYSSLW). At 1030 to 1044 (PAVPMAPDMSGEAAM) the chain is on the exoplasmic loop side. Residues 1045 to 1065 (LFSSGVFWVGLLSIPVASLLL) traverse the membrane as a helical segment. The Cytoplasmic portion of the chain corresponds to 1066–1164 (DVLYKVIKRT…DTTKQRPDEW (99 aa)). 1095–1102 (GAVVLGKS) is an ATP binding site. S1126 carries the post-translational modification Phosphoserine.

It belongs to the cation transport ATPase (P-type) (TC 3.A.3) family. Type IV subfamily. Component of a P4-ATPase flippase complex which consists of a catalytic alpha subunit and an accessory beta subunit. Interacts with TMEM30A to form a flippase complex; this complex forms an intermediate phosphoenzyme. Interacts with TMEM30B; this interaction is reported conflictingly. It depends on Mg(2+) as a cofactor. In terms of processing, cleaved by calpain in a caspase- and calcium influx-dependent manner only during platelet apoptosis and may lead to inactivation. Found in most tissues except liver and testis. Most abundant in brain and lung. Also detected in fetal tissues. Isoform 1 is expressed in brain. Isoform 2 and isoform 3 are expressed in reticulocytes. Expressed in mouse hippocampus in both dentate gyrus (DG) and the CA3 regions. Expressed in both neuronal as well as non-neuronal cells within the DG. Highly expressed in platelets.

Its subcellular location is the cytoplasmic vesicle. The protein resides in the secretory vesicle. The protein localises to the chromaffin granule membrane. It is found in the cytoplasmic granule. It localises to the cell membrane. Its subcellular location is the endoplasmic reticulum. The protein resides in the golgi apparatus. The protein localises to the endomembrane system. It catalyses the reaction ATP + H2O + phospholipidSide 1 = ADP + phosphate + phospholipidSide 2.. The catalysed reaction is a 1,2-diacyl-sn-glycero-3-phospho-L-serine(out) + ATP + H2O = a 1,2-diacyl-sn-glycero-3-phospho-L-serine(in) + ADP + phosphate + H(+). Its activity is regulated as follows. ATPase activity is stimulated by phosphatidylserine (PS) and minimally by phosphatidylethanolamine (PE). ATPase activity is inhibited by the vanadate and by the presence of calcium. In terms of biological role, catalytic component of a P4-ATPase flippase complex which catalyzes the hydrolysis of ATP coupled to the transport of aminophospholipids from the outer to the inner leaflet of various membranes and ensures the maintenance of asymmetric distribution of phospholipids. Phospholipid translocation also seems to be implicated in vesicle formation and in uptake of lipid signaling molecules. In vitro, its ATPase activity is selectively and stereospecifically stimulated by phosphatidylserine (PS). The flippase complex ATP8A1:TMEM30A seems to play a role in regulation of cell migration probably involving flippase-mediated translocation of phosphatidylethanolamine (PE) at the cell membrane. Acts as aminophospholipid translocase at the cell membrane in neuronal cells; the activity is associated with hippocampus-dependent learning. May play a role in brain connectivity. In Mus musculus (Mouse), this protein is Phospholipid-transporting ATPase IA.